Consider the following 462-residue polypeptide: MSKLWGGRFEKTASDWVDAFGASIEFDAQLVLEDLEGSMAHVTMLGDQGILLKEEVTQILDGLQQLKQKALADELKFEVYHEDIHMNLEALLHEAIGPVAGKMHTARSRNDQVATDMHLYLKERVKEVIQLIESLQRELHAHASENVETIMPGYTHLQRAQPISLAHHLLAYFWMLERDKERFTDSLKRIDWSPLGAGALAGTTFPIDRSRSAELLGFNRVYPNSLDAVSDRDFILEFLSNASMLMMHLSRFCEELILWASEEYRFITVSDTFSTGSSMMPQKKNPDMAELVRGKSGRVIGNLMGLLTLMKGLPLAYNKDLQEDKEGMFDTVKTVQGSLSIMAGMMNELTFHPDVMKKATERDFSNATELADYLTAKGLPFREAHEVTGRLVKYCVDERLYLRELPITVFQTYSELIQEDVYHALTPEQAVARRNSYGGTGFDAVREQLKEASVCMSTMTYS.

This sequence belongs to the lyase 1 family. Argininosuccinate lyase subfamily.

It is found in the cytoplasm. It carries out the reaction 2-(N(omega)-L-arginino)succinate = fumarate + L-arginine. It participates in amino-acid biosynthesis; L-arginine biosynthesis; L-arginine from L-ornithine and carbamoyl phosphate: step 3/3. The polypeptide is Argininosuccinate lyase (Exiguobacterium sp. (strain ATCC BAA-1283 / AT1b)).